A 328-amino-acid polypeptide reads, in one-letter code: Malate dehydrogenase (328 aa).

An NAD(+)-binding site is contributed by 12 to 18 (GAAGQIG). Arginine 95 and arginine 101 together coordinate substrate. NAD(+) contacts are provided by residues asparagine 108, glutamine 115, and 132 to 134 (VGN). 2 residues coordinate substrate: asparagine 134 and arginine 165. Histidine 190 functions as the Proton acceptor in the catalytic mechanism.

It belongs to the LDH/MDH superfamily. MDH type 2 family.

The catalysed reaction is (S)-malate + NAD(+) = oxaloacetate + NADH + H(+). Its function is as follows. Catalyzes the reversible oxidation of malate to oxaloacetate. The polypeptide is Malate dehydrogenase (Leptothrix cholodnii (strain ATCC 51168 / LMG 8142 / SP-6) (Leptothrix discophora (strain SP-6))).